The following is a 60-amino-acid chain: UPF0434 protein Spro_1718 (60 aa).

This sequence belongs to the UPF0434 family.

The chain is UPF0434 protein Spro_1718 from Serratia proteamaculans (strain 568).